Reading from the N-terminus, the 335-residue chain is Methionine aminopeptidase 1D, mitochondrial (335 aa).

The transit peptide at 1-19 (MAAPSGVHLLVRRGSHRIF) directs the protein to the mitochondrion. Residue histidine 161 coordinates substrate. Aspartate 178, aspartate 189, and histidine 252 together coordinate a divalent metal cation. Histidine 259 contacts substrate. 2 residues coordinate a divalent metal cation: glutamate 284 and glutamate 315.

This sequence belongs to the peptidase M24A family. Methionine aminopeptidase type 1 subfamily. It depends on Co(2+) as a cofactor. Zn(2+) serves as cofactor. The cofactor is Mn(2+). Requires Fe(2+) as cofactor. In terms of tissue distribution, overexpressed in colon cancer cell lines and colon tumors as compared to normal tissues (at protein level).

The protein localises to the mitochondrion. It catalyses the reaction Release of N-terminal amino acids, preferentially methionine, from peptides and arylamides.. Its function is as follows. Removes the N-terminal methionine from nascent proteins. The N-terminal methionine is often cleaved when the second residue in the primary sequence is small and uncharged (Met-Ala-, Cys, Gly, Pro, Ser, Thr, or Val). Requires deformylation of the N(alpha)-formylated initiator methionine before it can be hydrolyzed. May play a role in colon tumorigenesis. The sequence is that of Methionine aminopeptidase 1D, mitochondrial (METAP1D) from Homo sapiens (Human).